The sequence spans 651 residues: Bromodomain-containing protein 7 (651 aa).

Lys-21 is covalently cross-linked (Glycyl lysine isopeptide (Lys-Gly) (interchain with G-Cter in SUMO2)). Residues 34-103 form a disordered region; the sequence is VTELSTGSSG…RDRAENEVDR (70 aa). The segment covering 35 to 45 has biased composition (polar residues); sequence TELSTGSSGHD. Basic and acidic residues predominate over residues 47-57; that stretch reads SLFEDRSDHDK. The span at 58-69 shows a compositional bias: basic residues; it reads HKDRKRKKRKKG. The Nuclear localization signal signature appears at 65–96; that stretch reads KRKKGEKQAPGEEKGRKRRRVKEDKKKRDRDR. The segment covering 70-103 has biased composition (basic and acidic residues); sequence EKQAPGEEKGRKRRRVKEDKKKRDRDRAENEVDR. Glycyl lysine isopeptide (Lys-Gly) (interchain with G-Cter in SUMO2) cross-links involve residues Lys-127, Lys-186, Lys-197, Lys-201, Lys-212, and Lys-241. Residues 131–235 form the Bromo domain; it reads VEQTPLQEAL…HSGMKILSQE (105 aa). The disordered stretch occupies residues 252 to 316; that stretch reads KTRKQKERTD…RSSNSEREHE (65 aa). Residues Ser-279 and Ser-289 each carry the phosphoserine modification. Positions 290–316 are enriched in basic and acidic residues; sequence PAKDNKRKDKDVLEDKWRSSNSEREHE. Lys-305 participates in a covalent cross-link: Glycyl lysine isopeptide (Lys-Gly) (interchain with G-Cter in SUMO2). Lys-328 is subject to N6-acetyllysine. Lys-344 is covalently cross-linked (Glycyl lysine isopeptide (Lys-Gly) (interchain with G-Cter in SUMO2)). Position 380 is a phosphoserine (Ser-380). Residue Lys-389 forms a Glycyl lysine isopeptide (Lys-Gly) (interchain with G-Cter in SUMO2) linkage. Phosphoserine occurs at positions 475, 482, and 483. A coiled-coil region spans residues 536–567; sequence SEEAEVFQRKLDETTRLLRELQEAQNERLSTR. Ser-621 carries the phosphoserine modification.

In terms of assembly, interacts with IRF2 and HNRPUL1. Interacts (via N-terminus) with TP53. Interacts (via C-terminus) with EP300. Interacts with BRCA1. Interacts (via bromo domain) with histone H3 (via N-terminus) acetylated at 'Lys-14' (H3K14ac). Has low affinity for histone H3 acetylated at 'Lys-9' (H3K9ac). Has the highest affinity for histone H3 that is acetylated both at 'Lys-9' (H3K9ac) and at 'Lys-14' (H3K14ac). Has very low affinity for non-acetylated histone H3. Interacts (via bromo domain) with histone H4 (via N-terminus) acetylated at 'Lys-8' (H3K8ac) (in vitro). Interacts with TRIM24, PTPN13 and DVL1. Identified in a complex with SMARCA4/BRG1, SMARCC1/BAF155, SMARCE1/BAF57, DPF2/BAF45D and ARID2, subunits of the SWI/SNF-B (PBAF) chromatin remodeling complex. As to expression, ubiquitous.

The protein resides in the nucleus. The protein localises to the chromosome. Functionally, acts both as coactivator and as corepressor. May play a role in chromatin remodeling. Transcriptional corepressor that down-regulates the expression of target genes. Binds to target promoters, leading to increased histone H3 acetylation at 'Lys-9' (H3K9ac). Binds to the ESR1 promoter. Recruits BRCA1 and POU2F1 to the ESR1 promoter. Coactivator for TP53-mediated activation of transcription of a set of target genes. Required for TP53-mediated cell-cycle arrest in response to oncogene activation. Promotes acetylation of TP53 at 'Lys-382', and thereby promotes efficient recruitment of TP53 to target promoters. Inhibits cell cycle progression from G1 to S phase. Activator of the Wnt signaling pathway in a DVL1-dependent manner by negatively regulating the GSK3B phosphotransferase activity. Induces dephosphorylation of GSK3B at 'Tyr-216'. Down-regulates TRIM24-mediated activation of transcriptional activation by AR. In Mus musculus (Mouse), this protein is Bromodomain-containing protein 7 (Brd7).